Consider the following 306-residue polypeptide: Protein-methionine-sulfoxide reductase catalytic subunit MsrP (306 aa).

Positions 1 to 44 (MLIRHAPDLTDNDVTGHGLYLRRRDFIGGAAGLGLMAAAGSASA) form a signal peptide, tat-type signal. Mo-molybdopterin is bound by residues N69, 72 to 73 (YE), C127, T162, N210, R215, and 226 to 228 (GIK).

It belongs to the MsrP family. In terms of assembly, heterodimer of a catalytic subunit (MsrP) and a heme-binding subunit (MsrQ). The cofactor is Mo-molybdopterin. Predicted to be exported by the Tat system. The position of the signal peptide cleavage has not been experimentally proven.

The protein resides in the periplasm. The enzyme catalyses L-methionyl-[protein] + a quinone + H2O = L-methionyl-(S)-S-oxide-[protein] + a quinol. The catalysed reaction is L-methionyl-[protein] + a quinone + H2O = L-methionyl-(R)-S-oxide-[protein] + a quinol. In terms of biological role, part of the MsrPQ system that repairs oxidized periplasmic proteins containing methionine sulfoxide residues (Met-O), using respiratory chain electrons. Thus protects these proteins from oxidative-stress damage caused by reactive species of oxygen and chlorine generated by the host defense mechanisms. MsrPQ is essential for the maintenance of envelope integrity under bleach stress, rescuing a wide series of structurally unrelated periplasmic proteins from methionine oxidation. The catalytic subunit MsrP is non-stereospecific, being able to reduce both (R-) and (S-) diastereoisomers of methionine sulfoxide. The polypeptide is Protein-methionine-sulfoxide reductase catalytic subunit MsrP (Caulobacter sp. (strain K31)).